Here is a 217-residue protein sequence, read N- to C-terminus: Ribosomal RNA small subunit methyltransferase G (217 aa).

S-adenosyl-L-methionine contacts are provided by residues Gly76, Phe81, 128–129, and Arg142; that span reads LE.

The protein belongs to the methyltransferase superfamily. RNA methyltransferase RsmG family.

Its subcellular location is the cytoplasm. The enzyme catalyses guanosine(527) in 16S rRNA + S-adenosyl-L-methionine = N(7)-methylguanosine(527) in 16S rRNA + S-adenosyl-L-homocysteine. In terms of biological role, specifically methylates the N7 position of guanine in position 527 of 16S rRNA. The protein is Ribosomal RNA small subunit methyltransferase G of Rhizorhabdus wittichii (strain DSM 6014 / CCUG 31198 / JCM 15750 / NBRC 105917 / EY 4224 / RW1) (Sphingomonas wittichii).